The following is a 198-amino-acid chain: Imidazoleglycerol-phosphate dehydratase (198 aa).

The protein belongs to the imidazoleglycerol-phosphate dehydratase family.

It is found in the cytoplasm. The catalysed reaction is D-erythro-1-(imidazol-4-yl)glycerol 3-phosphate = 3-(imidazol-4-yl)-2-oxopropyl phosphate + H2O. The protein operates within amino-acid biosynthesis; L-histidine biosynthesis; L-histidine from 5-phospho-alpha-D-ribose 1-diphosphate: step 6/9. The protein is Imidazoleglycerol-phosphate dehydratase of Methylobacillus flagellatus (strain ATCC 51484 / DSM 6875 / VKM B-1610 / KT).